Reading from the N-terminus, the 250-residue chain is Acetoacetate decarboxylase 1 (250 aa).

Lysine 120 (schiff-base intermediate with acetoacetate) is an active-site residue.

It belongs to the ADC family.

The catalysed reaction is acetoacetate + H(+) = acetone + CO2. Functionally, catalyzes the conversion of acetoacetate to acetone and carbon dioxide. This chain is Acetoacetate decarboxylase 1, found in Bradyrhizobium diazoefficiens (strain JCM 10833 / BCRC 13528 / IAM 13628 / NBRC 14792 / USDA 110).